A 169-amino-acid polypeptide reads, in one-letter code: Flagellar biosynthetic protein FliU (169 aa).

The protein belongs to the FliB family.

Its function is as follows. Required for the secretion of flagellin and expression of motility. This chain is Flagellar biosynthetic protein FliU (fliU), found in Salmonella muenchen.